A 76-amino-acid chain; its full sequence is Omega-scoloptoxin(13)-Ssm2a (76 aa).

The first 22 residues, Met1–Ala22, serve as a signal peptide directing secretion.

Post-translationally, contains 4 disulfide bonds. In terms of tissue distribution, expressed by the venom gland.

Its subcellular location is the secreted. Functionally, inhibits voltage-gated calcium channel (Cav) currents in DRG neurons (IC(50)=1590 nM). The sequence is that of Omega-scoloptoxin(13)-Ssm2a from Scolopendra mutilans (Chinese red-headed centipede).